Here is a 308-residue protein sequence, read N- to C-terminus: ADP-L-glycero-D-manno-heptose-6-epimerase (308 aa).

NADP(+)-binding positions include 10–11, 31–32, Lys38, Lys53, 75–79, and Asn92; these read FI, DN, and EGACS. Tyr139 (proton acceptor) is an active-site residue. Position 143 (Lys143) interacts with NADP(+). Residue Asn168 participates in substrate binding. The NADP(+) site is built by Val169 and Lys177. The active-site Proton acceptor is Lys177. Substrate-binding positions include Ser179, His186, 200–203, Arg208, and Tyr271; that span reads FAGS.

It belongs to the NAD(P)-dependent epimerase/dehydratase family. HldD subfamily. In terms of assembly, homopentamer. NADP(+) is required as a cofactor.

The enzyme catalyses ADP-D-glycero-beta-D-manno-heptose = ADP-L-glycero-beta-D-manno-heptose. It participates in nucleotide-sugar biosynthesis; ADP-L-glycero-beta-D-manno-heptose biosynthesis; ADP-L-glycero-beta-D-manno-heptose from D-glycero-beta-D-manno-heptose 7-phosphate: step 4/4. Functionally, catalyzes the interconversion between ADP-D-glycero-beta-D-manno-heptose and ADP-L-glycero-beta-D-manno-heptose via an epimerization at carbon 6 of the heptose. The protein is ADP-L-glycero-D-manno-heptose-6-epimerase of Haemophilus influenzae (strain 86-028NP).